Here is a 154-residue protein sequence, read N- to C-terminus: Superoxide dismutase [Cu-Zn] (154 aa).

Residues His-47, His-49, and His-64 each coordinate Cu cation. A disulfide bridge connects residues Cys-58 and Cys-147. Positions 64, 72, 81, and 84 each coordinate Zn(2+). His-121 lines the Cu cation pocket. Arg-144 lines the substrate pocket.

It belongs to the Cu-Zn superoxide dismutase family. In terms of assembly, homodimer. The cofactor is Cu cation. It depends on Zn(2+) as a cofactor.

The protein localises to the cytoplasm. The enzyme catalyses 2 superoxide + 2 H(+) = H2O2 + O2. Destroys radicals which are normally produced within the cells and which are toxic to biological systems. This is Superoxide dismutase [Cu-Zn] (SOD1) from Candida albicans (Yeast).